The sequence spans 289 residues: ATP synthase subunit gamma, mitochondrial (289 aa).

The protein belongs to the ATPase gamma chain family. F-type ATPases have 2 components, CF(1) - the catalytic core - and CF(0) - the membrane proton channel. CF(1) has five subunits: alpha(3), beta(3), gamma(1), delta(1), epsilon(1). CF(0) has three main subunits: a, b and c.

It localises to the mitochondrion. The protein resides in the mitochondrion inner membrane. Functionally, mitochondrial membrane ATP synthase (F(1)F(0) ATP synthase or Complex V) produces ATP from ADP in the presence of a proton gradient across the membrane which is generated by electron transport complexes of the respiratory chain. F-type ATPases consist of two structural domains, F(1) - containing the extramembraneous catalytic core, and F(0) - containing the membrane proton channel, linked together by a central stalk and a peripheral stalk. During catalysis, ATP synthesis in the catalytic domain of F(1) is coupled via a rotary mechanism of the central stalk subunits to proton translocation. Part of the complex F(1) domain and the central stalk which is part of the complex rotary element. The gamma subunit protrudes into the catalytic domain formed of alpha(3)beta(3). Rotation of the central stalk against the surrounding alpha(3)beta(3) subunits leads to hydrolysis of ATP in three separate catalytic sites on the beta subunits. The chain is ATP synthase subunit gamma, mitochondrial (ATP3) from Kluyveromyces lactis (strain ATCC 8585 / CBS 2359 / DSM 70799 / NBRC 1267 / NRRL Y-1140 / WM37) (Yeast).